Reading from the N-terminus, the 166-residue chain is Olee1-like protein (166 aa).

Positions 1–23 (MAKSIIIQAPALCFLSLLGFAYS) are cleaved as a signal peptide. 3 disulfide bridges follow: C35–C106, C38–C150, and C59–C94.

The protein belongs to the Ole e I family.

It localises to the secreted. This Betula pendula (European white birch) protein is Olee1-like protein.